An 831-amino-acid chain; its full sequence is MKISRRDFIKQTAITATASVAGVTLPAGAANFVTDSEVTKLKWSKAPCRFCGTGCGVTVAVKDNKVVATQGDPQAEVNKGLNCVKGYFLSKIMYGQDRLTRPLMRMKNGKYDKNGDFAPVTWDQAFDEMERQFKRVLKEKGPTAVGMFGSGQWTVWEGYAAAKLYKAGFRSNNIDPNARHCMASAAAGFMRTFGMDEPMGCYDDFEAADAFVLWGSNMAEMHPILWTRVTDRRLSHPKTRVVVLSTFTHRCFDLADIGIIFKPQTDLAMLNYIANYIIRNNKVNKDFVNKHTVFKEGVTDIGYGLRPDHPLQKAAKNASDPGAAKVITFDEFAKFVSKYDADYVSKLSAVPKAKLDQLAELYADPNIKVMSLWTMGFNQHTRGTWANNMVYNLHLLTGKIATPGNSPFSLTGQPSACGTAREVGTFSHRLPADMVVTNPKHREEAERIWKLPPGTIPDKPGYDAVLQNRMLKDGKLNAYWVQVNNNMQAAANLMEEGLPGYRNPANFIVVSDAYPTVTALAADLVLPSAMWVEKEGAYGNAERRTQFWHQLVDAPGEARSDLWQLVEFAKRFKVEEVWPPELIAKKPEYKGKTLYDVLYRNGQVDKFPLKDVNAEYHNAEAKAFGFYLQKGLFEEYATFGRGHGHDLAPFDAYHEARGLRWPVVNGKETRWRYREGSDPYVKAGTGFQFYGNPDGKAVIFALPYEPPAESPDKEYPYWLVTGRVLEHWHSGSMTRRVPELYRSFPNAVVFMHPEDAKALGLRRGVEVEVVSRRGRMRSRIETRGRDAPPRGLVFVPWFDASQLINKVTLDATCPISLQTDFKKCAVKIVKV.

Positions 1–29 form a signal peptide, tat-type signal; sequence MKISRRDFIKQTAITATASVAGVTLPAGA. The region spanning 41–97 is the 4Fe-4S Mo/W bis-MGD-type domain; sequence LKWSKAPCRFCGTGCGVTVAVKDNKVVATQGDPQAEVNKGLNCVKGYFLSKIMYGQD. The [4Fe-4S] cluster site is built by C48, C51, C55, and C83. Residues K85, Q152, N177, C181, 214–221, 245–249, 264–266, M375, Q379, N485, 511–512, K534, D561, and 721–730 contribute to the Mo-bis(molybdopterin guanine dinucleotide) site; these read WGSNMAEM, STFTH, QTD, SD, and TGRVLEHWHS. W797 serves as a coordination point for substrate. The Mo-bis(molybdopterin guanine dinucleotide) site is built by N805 and K822.

The protein belongs to the prokaryotic molybdopterin-containing oxidoreductase family. NasA/NapA/NarB subfamily. Component of the periplasmic nitrate reductase NapAB complex composed of NapA and NapB. [4Fe-4S] cluster serves as cofactor. Requires Mo-bis(molybdopterin guanine dinucleotide) as cofactor. Post-translationally, predicted to be exported by the Tat system. The position of the signal peptide cleavage has been experimentally proven.

Its subcellular location is the periplasm. The catalysed reaction is 2 Fe(II)-[cytochrome] + nitrate + 2 H(+) = 2 Fe(III)-[cytochrome] + nitrite + H2O. In terms of biological role, catalytic subunit of the periplasmic nitrate reductase complex NapAB. Receives electrons from NapB and catalyzes the reduction of nitrate to nitrite. The protein is Periplasmic nitrate reductase of Cupriavidus necator (strain ATCC 17699 / DSM 428 / KCTC 22496 / NCIMB 10442 / H16 / Stanier 337) (Ralstonia eutropha).